The following is a 224-amino-acid chain: Large ribosomal subunit protein uL4 (224 aa).

The interval 52–109 (AAARQGTHSTKTRGDVSGGGRKPYRQKGTGRARQGSTRAPQFTGGGVVHGPKPRDYSQ) is disordered.

The protein belongs to the universal ribosomal protein uL4 family. Part of the 50S ribosomal subunit.

In terms of biological role, one of the primary rRNA binding proteins, this protein initially binds near the 5'-end of the 23S rRNA. It is important during the early stages of 50S assembly. It makes multiple contacts with different domains of the 23S rRNA in the assembled 50S subunit and ribosome. Forms part of the polypeptide exit tunnel. This Mycobacterium marinum (strain ATCC BAA-535 / M) protein is Large ribosomal subunit protein uL4.